Reading from the N-terminus, the 353-residue chain is UPF0283 membrane protein KPK_3110 (353 aa).

Transmembrane regions (helical) follow at residues 70–90 (MVSA…VQWT), 99–119 (WIAL…VGSV), and 213–233 (ESTL…FIAW).

It belongs to the UPF0283 family.

Its subcellular location is the cell inner membrane. The protein is UPF0283 membrane protein KPK_3110 of Klebsiella pneumoniae (strain 342).